A 549-amino-acid polypeptide reads, in one-letter code: Glucose-6-phosphate isomerase (549 aa).

Residue E355 is the Proton donor of the active site. Catalysis depends on residues H386 and K514.

Belongs to the GPI family.

It is found in the cytoplasm. The enzyme catalyses alpha-D-glucose 6-phosphate = beta-D-fructose 6-phosphate. It participates in carbohydrate biosynthesis; gluconeogenesis. The protein operates within carbohydrate degradation; glycolysis; D-glyceraldehyde 3-phosphate and glycerone phosphate from D-glucose: step 2/4. In terms of biological role, catalyzes the reversible isomerization of glucose-6-phosphate to fructose-6-phosphate. The polypeptide is Glucose-6-phosphate isomerase (Salmonella arizonae (strain ATCC BAA-731 / CDC346-86 / RSK2980)).